The primary structure comprises 348 residues: Dihydroorotase (348 aa).

Residues His-17 and His-19 each contribute to the Zn(2+) site. Substrate contacts are provided by residues 19-21 and Asn-45; that span reads HLR. Positions 103, 140, and 178 each coordinate Zn(2+). At Lys-103 the chain carries N6-carboxylysine. His-140 contacts substrate. Leu-223 serves as a coordination point for substrate. A Zn(2+)-binding site is contributed by Asp-251. Asp-251 is an active-site residue. Substrate-binding residues include His-255 and Ala-267.

The protein belongs to the metallo-dependent hydrolases superfamily. DHOase family. Class II DHOase subfamily. As to quaternary structure, homodimer. Zn(2+) serves as cofactor.

It catalyses the reaction (S)-dihydroorotate + H2O = N-carbamoyl-L-aspartate + H(+). The protein operates within pyrimidine metabolism; UMP biosynthesis via de novo pathway; (S)-dihydroorotate from bicarbonate: step 3/3. Its function is as follows. Catalyzes the reversible cyclization of carbamoyl aspartate to dihydroorotate. This Shigella dysenteriae serotype 1 (strain Sd197) protein is Dihydroorotase.